A 351-amino-acid chain; its full sequence is Leukotriene B4 receptor 1 (351 aa).

The Extracellular segment spans residues 1-21; sequence MAANTTSPAAPSSPGGMSLSL. Asparagine 4 carries an N-linked (GlcNAc...) asparagine glycan. A helical membrane pass occupies residues 22–44; the sequence is LPIVLLSVALAVGLPGNSFVVWS. Topologically, residues 45–56 are cytoplasmic; it reads ILKRMQKRTVTA. The chain crosses the membrane as a helical span at residues 57 to 77; it reads LLVLNLALADLAVLLTAPFFL. At 78–93 the chain is on the extracellular side; the sequence is HFLARGTWSFREMGCR. A helical membrane pass occupies residues 94–115; that stretch reads LCHYVCGISMYASVLLITIMSL. Over 116 to 140 the chain is Cytoplasmic; the sequence is DRSLAVARPFMSQKVRTKAFARWVL. The chain crosses the membrane as a helical span at residues 141–161; sequence AGIWVVSFLLAIPVLVYRTVK. Residues 162 to 179 lie on the Extracellular side of the membrane; the sequence is WNNRTLICAPNYPNKEHK. A glycan (N-linked (GlcNAc...) asparagine) is linked at asparagine 164. A helical transmembrane segment spans residues 180–200; that stretch reads VFHLLFEAITGFLLPFLAVVA. The Cytoplasmic segment spans residues 201-222; the sequence is SYSDIGRRLQARRFRRSRRTGR. Residues 223 to 243 form a helical membrane-spanning segment; the sequence is LVVLIILAFAAFWLPYHLVNL. Over 244–268 the chain is Extracellular; that stretch reads VEAGRTVAGWDKNSPAGQRLRLARY. A helical transmembrane segment spans residues 269 to 289; that stretch reads VLIALAFLSSSVNPVLYACAG. The Cytoplasmic portion of the chain corresponds to 290–351; that stretch reads GGLLRSAGVG…TSSTIPESSK (62 aa). Composition is skewed to polar residues over residues 311–326 and 339–351; these read EVSSTRRGGTLVQTPK and SFMTSSTIPESSK. The segment at 311–351 is disordered; that stretch reads EVSSTRRGGTLVQTPKDTPACPEPGPTDSFMTSSTIPESSK.

Belongs to the G-protein coupled receptor 1 family. Phosphorylated by GRK6 upon leukotriene B4 binding; which promotes desensitization. As to expression, highly expressed on activated leukocytes, including eosinophils.

Its subcellular location is the cell membrane. In terms of biological role, receptor for leukotriene B4, a potent chemoattractant involved in inflammation and immune response. This chain is Leukotriene B4 receptor 1 (Ltb4r), found in Mus musculus (Mouse).